We begin with the raw amino-acid sequence, 1077 residues long: Error-prone DNA polymerase (1077 aa).

This sequence belongs to the DNA polymerase type-C family. DnaE2 subfamily.

The protein localises to the cytoplasm. It catalyses the reaction DNA(n) + a 2'-deoxyribonucleoside 5'-triphosphate = DNA(n+1) + diphosphate. Functionally, DNA polymerase involved in damage-induced mutagenesis and translesion synthesis (TLS). It is not the major replicative DNA polymerase. The chain is Error-prone DNA polymerase from Brucella melitensis biotype 1 (strain ATCC 23456 / CCUG 17765 / NCTC 10094 / 16M).